Consider the following 1453-residue polypeptide: Clustered mitochondria protein homolog (1453 aa).

Over residues 78 to 101 (LSENGQENSPHNSDSGHETSSPDS) the composition is skewed to polar residues. The segment at 78-110 (LSENGQENSPHNSDSGHETSSPDSPLTPIEEGA) is disordered. The Clu domain occupies 439–690 (EDGIRAEDCT…RTFPPDVNYL (252 aa)). The tract at residues 979–1015 (PLTPSNEEVSMPINSVKKSRSSKRRKQISSGGKENDD) is disordered. Positions 995 to 1005 (KKSRSSKRRKQ) are enriched in basic residues. TPR repeat units follow at residues 1235–1268 (AEID…HQIY) and 1277–1310 (ALIY…YSKT).

The protein belongs to the CLU family.

It localises to the cytoplasm. Functionally, mRNA-binding protein involved in proper cytoplasmic distribution of mitochondria. This is Clustered mitochondria protein homolog from Brugia malayi (Filarial nematode worm).